The primary structure comprises 290 residues: Phosphoribosylaminoimidazole-succinocarboxamide synthase (290 aa).

Belongs to the SAICAR synthetase family.

It carries out the reaction 5-amino-1-(5-phospho-D-ribosyl)imidazole-4-carboxylate + L-aspartate + ATP = (2S)-2-[5-amino-1-(5-phospho-beta-D-ribosyl)imidazole-4-carboxamido]succinate + ADP + phosphate + 2 H(+). Its pathway is purine metabolism; IMP biosynthesis via de novo pathway; 5-amino-1-(5-phospho-D-ribosyl)imidazole-4-carboxamide from 5-amino-1-(5-phospho-D-ribosyl)imidazole-4-carboxylate: step 1/2. This Haemophilus influenzae (strain PittEE) protein is Phosphoribosylaminoimidazole-succinocarboxamide synthase.